A 323-amino-acid polypeptide reads, in one-letter code: tRNA dimethylallyltransferase (323 aa).

18–25 (GPTASGKT) lines the ATP pocket. 20-25 (TASGKT) provides a ligand contact to substrate. The interval 44-47 (DSAL) is interaction with substrate tRNA.

Belongs to the IPP transferase family. In terms of assembly, monomer. Mg(2+) serves as cofactor.

It carries out the reaction adenosine(37) in tRNA + dimethylallyl diphosphate = N(6)-dimethylallyladenosine(37) in tRNA + diphosphate. Functionally, catalyzes the transfer of a dimethylallyl group onto the adenine at position 37 in tRNAs that read codons beginning with uridine, leading to the formation of N6-(dimethylallyl)adenosine (i(6)A). This Blochmanniella floridana protein is tRNA dimethylallyltransferase.